The chain runs to 627 residues: RNA interference defective protein 10 (627 aa).

3 disordered regions span residues 1-31 (MSNH…VRQN), 467-487 (QRDT…HDQY), and 523-589 (SSVR…SEDY). 3 stretches are compositionally biased toward basic and acidic residues: residues 7–16 (NFRDYQREGI), 467–478 (QRDTDEQYDVHQ), and 526–537 (REPEHPSARSRD).

This sequence belongs to the maelstrom family. Interacts with rde-11 (via RING-type zinc finger domain). Interacts with ergo-1.

Functionally, in complex with rde-11, required in the endogenous and exogenous siRNA pathway for biogenesis and accumulation of secondary small interfering RNA (siRNA) intermediates, such as 22G-siRNAs derived from ergo-1 targets. The sequence is that of RNA interference defective protein 10 from Caenorhabditis elegans.